Consider the following 213-residue polypeptide: Orotate phosphoribosyltransferase (213 aa).

Position 26 (lysine 26) interacts with 5-phospho-alpha-D-ribose 1-diphosphate. Orotate is bound at residue 34–35 (FF). Residues 72-73 (YK), arginine 99, lysine 100, lysine 103, histidine 105, and 124-132 (DDVITAGTA) each bind 5-phospho-alpha-D-ribose 1-diphosphate. The orotate site is built by threonine 128 and arginine 156.

The protein belongs to the purine/pyrimidine phosphoribosyltransferase family. PyrE subfamily. In terms of assembly, homodimer. Mg(2+) is required as a cofactor.

It catalyses the reaction orotidine 5'-phosphate + diphosphate = orotate + 5-phospho-alpha-D-ribose 1-diphosphate. Its pathway is pyrimidine metabolism; UMP biosynthesis via de novo pathway; UMP from orotate: step 1/2. Catalyzes the transfer of a ribosyl phosphate group from 5-phosphoribose 1-diphosphate to orotate, leading to the formation of orotidine monophosphate (OMP). The chain is Orotate phosphoribosyltransferase from Escherichia coli O45:K1 (strain S88 / ExPEC).